Reading from the N-terminus, the 375-residue chain is Dihydroorotate dehydrogenase (quinone) (375 aa).

FMN-binding positions include 78–82 (AGLDK) and Thr102. Lys82 serves as a coordination point for substrate. 127-131 (NRMGF) serves as a coordination point for substrate. FMN contacts are provided by Asn159 and Asn192. A substrate-binding site is contributed by Asn192. The active-site Nucleophile is the Ser195. Residue Asn197 participates in substrate binding. Residues Lys230 and Thr258 each coordinate FMN. 259-260 (NT) is a binding site for substrate. FMN-binding positions include Gly288, Gly317, and 338-339 (YT).

Belongs to the dihydroorotate dehydrogenase family. Type 2 subfamily. Monomer. FMN is required as a cofactor.

The protein localises to the cell membrane. The catalysed reaction is (S)-dihydroorotate + a quinone = orotate + a quinol. Its pathway is pyrimidine metabolism; UMP biosynthesis via de novo pathway; orotate from (S)-dihydroorotate (quinone route): step 1/1. Catalyzes the conversion of dihydroorotate to orotate with quinone as electron acceptor. The sequence is that of Dihydroorotate dehydrogenase (quinone) from Cyanothece sp. (strain PCC 7425 / ATCC 29141).